We begin with the raw amino-acid sequence, 228 residues long: Rab-like protein 2B (228 aa).

GTP contacts are provided by residues 28 to 35, 76 to 80, and 133 to 136; these read GDSAVGKS, DTAGQ, and NKID. Residues 200–228 are disordered; sequence LEQEEEDVPDQEQSSSIETPSEEAASPHS.

This sequence belongs to the small GTPase superfamily. Rab family. Interacts (in its GTP-bound form) with CEP19 (via residues 121-150); this interaction is required for its localization to the mother centriole and cilium basal body. Interacts (in its GTP-bound form) with the intraflagellar transport (IFT) complex B (via the IFT74-IFT81 heterodimer). Binding to CEP19 and the IFT74-IFT81 heterodimer is mutually exclusive. Expressed in the testis.

It localises to the cytoplasm. The protein resides in the cytoskeleton. Its subcellular location is the microtubule organizing center. It is found in the centrosome. The protein localises to the centriole. It localises to the cilium basal body. Its function is as follows. Small GTPase required for ciliation. Activated in a guanine nucleotide exchange factor (GEF)-independent manner via its intrinsic GDP for GTP nucleotide exchange ability. Involved in ciliary assembly by binding the intraflagellar transport (IFT) complex B from the large pool pre-docked at the base of the cilium and thus triggers its entry into the cilia. This is Rab-like protein 2B (RABL2B) from Homo sapiens (Human).